Reading from the N-terminus, the 97-residue chain is YcgL domain-containing protein Pmen_1774 (97 aa).

The 85-residue stretch at 3–87 (RICSIYKSPR…PEEDYIQHLP (85 aa)) folds into the YcgL domain.

The polypeptide is YcgL domain-containing protein Pmen_1774 (Ectopseudomonas mendocina (strain ymp) (Pseudomonas mendocina)).